We begin with the raw amino-acid sequence, 83 residues long: MDSIISAASVIAAGLAVGLAAIGPGIGQGTASAQAVEGIARQPEAEGKIRGTLLLSLAFMEALTIYGLVVALSLLFANPFINQ.

Helical transmembrane passes span 4 to 24 and 57 to 77; these read IISA…AIGP and LAFM…LLFA.

Belongs to the ATPase C chain family. F-type ATPases have 2 components, F(1) - the catalytic core - and F(0) - the membrane proton channel. F(1) has five subunits: alpha(3), beta(3), gamma(1), delta(1), epsilon(1). F(0) has four main subunits: a(1), b(1), b'(1) and c(10-14). The alpha and beta chains form an alternating ring which encloses part of the gamma chain. F(1) is attached to F(0) by a central stalk formed by the gamma and epsilon chains, while a peripheral stalk is formed by the delta, b and b' chains.

The protein resides in the plastid. It localises to the chloroplast thylakoid membrane. Its function is as follows. F(1)F(0) ATP synthase produces ATP from ADP in the presence of a proton or sodium gradient. F-type ATPases consist of two structural domains, F(1) containing the extramembraneous catalytic core and F(0) containing the membrane proton channel, linked together by a central stalk and a peripheral stalk. During catalysis, ATP synthesis in the catalytic domain of F(1) is coupled via a rotary mechanism of the central stalk subunits to proton translocation. Functionally, key component of the F(0) channel; it plays a direct role in translocation across the membrane. A homomeric c-ring of between 10-14 subunits forms the central stalk rotor element with the F(1) delta and epsilon subunits. The protein is ATP synthase subunit c, chloroplastic of Galdieria sulphuraria (Red alga).